Here is a 214-residue protein sequence, read N- to C-terminus: S-crystallin 1 (214 aa).

The 78-residue stretch at 2 to 79 folds into the GST N-terminal domain; it reads PSYTLHYFNH…YLAREFGFHG (78 aa). In terms of domain architecture, GST C-terminal spans 81–214; that stretch reads NNMEMARVDF…YLQRRCRTDF (134 aa).

It belongs to the GST superfamily. As to expression, lens.

In terms of biological role, S-crystallins are structural components of squids and octopi eye lens. Contains relatively little GST activity (1/1000 of that of mammalian GST enzyme). The chain is S-crystallin 1 (OCTS1) from Octopus vulgaris (Common octopus).